Here is a 290-residue protein sequence, read N- to C-terminus: uncharacterized protein (290 aa).

Disordered regions lie at residues 17-91 and 220-259; these read QTIS…EKNS and DKAS…QMPN. Over residues 40–50 the composition is skewed to polar residues; that stretch reads NITTHLSTGNL. Residues 66-83 show a composition bias toward basic residues; it reads STKKGKRVSKPGTKKKEK. Residues 233 to 249 show a composition bias toward basic and acidic residues; it reads EGEKDGNAEQGKQKEVQ.

This is an uncharacterized protein from Saccharomyces cerevisiae (strain ATCC 204508 / S288c) (Baker's yeast).